Reading from the N-terminus, the 397-residue chain is Methylthioribose kinase (397 aa).

ATP is bound by residues Asn44, Lys61, and 115 to 117; that span reads EDL. Asp233 provides a ligand contact to substrate. 250 to 252 lines the ATP pocket; the sequence is DPE. Residue Arg340 coordinates substrate.

It belongs to the methylthioribose kinase family. Homodimer.

It carries out the reaction 5-(methylsulfanyl)-D-ribose + ATP = 5-(methylsulfanyl)-alpha-D-ribose 1-phosphate + ADP + H(+). Its pathway is amino-acid biosynthesis; L-methionine biosynthesis via salvage pathway; S-methyl-5-thio-alpha-D-ribose 1-phosphate from S-methyl-5'-thioadenosine (hydrolase route): step 2/2. Its function is as follows. Catalyzes the phosphorylation of methylthioribose into methylthioribose-1-phosphate. The sequence is that of Methylthioribose kinase (mtnK) from Bacillus subtilis (strain 168).